The chain runs to 429 residues: MSEIVDIYAREILDSRGNPTLEVDVFLESGAFGRAAVPSGASTGEREALELRDGDMARYLGKGVLKAVDNVNNEIADELIGMDADDQVAIDNKMLELDGTEFKSKLGANATLGVSLAVAKAAADEAGLSLHKYIGGAGARELPLPMMNILNGGAHADNNVDIQEFMIMPAGARCFAEALRMGAEIFHALKSVLKGKGYNTSVGDEGGFAPNLKSNEEALQVIMEAIVKAGYKPGEDVLLALDVASSELFKDGIYTLENEQQKQKTAAQLIDFYEDLVNRYPIISIEDGMAENDWDGWKLLTDRLGKRIQIVGDDLFVTNPRILKEGIQKGIANSILVKLNQIGTLTETLEAIEMAKRAGYTTVISHRSGETEDTTLADLAVAVNAGQIKTGSLCRTDRVAKYNQLLRIEEELDDCALFRGHDVFYNLKK.

Residue Gln163 participates in (2R)-2-phosphoglycerate binding. The active-site Proton donor is the Glu205. Residues Asp242, Glu286, and Asp313 each coordinate Mg(2+). Residues Lys338, Arg367, Ser368, and Lys389 each contribute to the (2R)-2-phosphoglycerate site. Lys338 serves as the catalytic Proton acceptor.

It belongs to the enolase family. Mg(2+) serves as cofactor.

The protein localises to the cytoplasm. The protein resides in the secreted. Its subcellular location is the cell surface. It carries out the reaction (2R)-2-phosphoglycerate = phosphoenolpyruvate + H2O. It participates in carbohydrate degradation; glycolysis; pyruvate from D-glyceraldehyde 3-phosphate: step 4/5. Catalyzes the reversible conversion of 2-phosphoglycerate (2-PG) into phosphoenolpyruvate (PEP). It is essential for the degradation of carbohydrates via glycolysis. This is Enolase from Pelobacter propionicus (strain DSM 2379 / NBRC 103807 / OttBd1).